We begin with the raw amino-acid sequence, 521 residues long: Glucose-6-phosphate isomerase (521 aa).

Residue Glu351 is the Proton donor of the active site. Residues His382 and Lys491 contribute to the active site.

The protein belongs to the GPI family.

The protein resides in the cytoplasm. It catalyses the reaction alpha-D-glucose 6-phosphate = beta-D-fructose 6-phosphate. The protein operates within carbohydrate biosynthesis; gluconeogenesis. It functions in the pathway carbohydrate degradation; glycolysis; D-glyceraldehyde 3-phosphate and glycerone phosphate from D-glucose: step 2/4. Its function is as follows. Catalyzes the reversible isomerization of glucose-6-phosphate to fructose-6-phosphate. The chain is Glucose-6-phosphate isomerase from Polaromonas naphthalenivorans (strain CJ2).